The sequence spans 514 residues: Glutamyl-tRNA(Gln) amidotransferase subunit B, mitochondrial (514 aa).

The protein belongs to the GatB/GatE family. GatB subfamily. As to quaternary structure, subunit of the heterotrimeric GatCAB amidotransferase (AdT) complex, composed of A, B and C subunits.

The protein resides in the mitochondrion. The catalysed reaction is L-glutamyl-tRNA(Gln) + L-glutamine + ATP + H2O = L-glutaminyl-tRNA(Gln) + L-glutamate + ADP + phosphate + H(+). Allows the formation of correctly charged Gln-tRNA(Gln) through the transamidation of misacylated Glu-tRNA(Gln) in the mitochondria. The reaction takes place in the presence of glutamine and ATP through an activated gamma-phospho-Glu-tRNA(Gln). This is Glutamyl-tRNA(Gln) amidotransferase subunit B, mitochondrial from Naegleria gruberi (Amoeba).